Reading from the N-terminus, the 425-residue chain is tRNA(Ile)-lysidine synthase (425 aa).

27 to 32 is a binding site for ATP; it reads SGGLDS.

It belongs to the tRNA(Ile)-lysidine synthase family.

It is found in the cytoplasm. It carries out the reaction cytidine(34) in tRNA(Ile2) + L-lysine + ATP = lysidine(34) in tRNA(Ile2) + AMP + diphosphate + H(+). Its function is as follows. Ligates lysine onto the cytidine present at position 34 of the AUA codon-specific tRNA(Ile) that contains the anticodon CAU, in an ATP-dependent manner. Cytidine is converted to lysidine, thus changing the amino acid specificity of the tRNA from methionine to isoleucine. This is tRNA(Ile)-lysidine synthase from Streptococcus pneumoniae (strain Taiwan19F-14).